The primary structure comprises 416 residues: Isocitrate dehydrogenase [NADP] (416 aa).

NADP(+) is bound by residues 77–79 (TIT) and arginine 84. Substrate is bound at residue threonine 79. Substrate is bound by residues 96–102 (SPNGTIR), arginine 111, and arginine 134. Aspartate 254 is a Mn(2+) binding site. Lysine 262 contacts NADP(+). A Mn(2+)-binding site is contributed by aspartate 277. NADP(+) is bound by residues 312-317 (GTVTRH) and asparagine 330.

Belongs to the isocitrate and isopropylmalate dehydrogenases family. Heterodimer. Requires Mg(2+) as cofactor. It depends on Mn(2+) as a cofactor.

It localises to the cytoplasm. It catalyses the reaction D-threo-isocitrate + NADP(+) = 2-oxoglutarate + CO2 + NADPH. Functionally, may supply 2-oxoglutarate for amino acid biosynthesis and ammonia assimilation via the glutamine synthetase/glutamate synthase (GS/GOGAT) pathway. The polypeptide is Isocitrate dehydrogenase [NADP] (ICDH-1) (Solanum tuberosum (Potato)).